We begin with the raw amino-acid sequence, 201 residues long: Peptide deformylase (201 aa).

The Fe cation site is built by Cys-121 and His-163. Residue Glu-164 is part of the active site. Position 167 (His-167) interacts with Fe cation.

It belongs to the polypeptide deformylase family. It depends on Fe(2+) as a cofactor.

It catalyses the reaction N-terminal N-formyl-L-methionyl-[peptide] + H2O = N-terminal L-methionyl-[peptide] + formate. In terms of biological role, removes the formyl group from the N-terminal Met of newly synthesized proteins. Requires at least a dipeptide for an efficient rate of reaction. N-terminal L-methionine is a prerequisite for activity but the enzyme has broad specificity at other positions. The sequence is that of Peptide deformylase from Parasynechococcus marenigrum (strain WH8102).